The sequence spans 600 residues: Probable pectin methyltransferase QUA3 (600 aa).

Residues Met-1–Arg-18 are Cytoplasmic-facing. A helical; Signal-anchor for type II membrane protein transmembrane segment spans residues Leu-19–Phe-39. Residues Thr-40 to His-600 lie on the Lumenal side of the membrane. Asn-283 carries an N-linked (GlcNAc...) asparagine glycan.

It belongs to the methyltransferase superfamily. As to expression, highly expressed and abundant in suspension-cultured cells, but low levels in seedlings.

Its subcellular location is the golgi apparatus membrane. It participates in glycan metabolism; pectin biosynthesis. In terms of biological role, S-adenosyl-L-methionine (SAM)-dependent methyltransferase (MTase) which mediates the methylesterification of the pectin homogalacturonan (HG) and thus regulates cell wall biosynthesis, at least in suspension-cultured cells. This Arabidopsis thaliana (Mouse-ear cress) protein is Probable pectin methyltransferase QUA3.